A 389-amino-acid polypeptide reads, in one-letter code: Galactose-1-phosphate uridylyltransferase (389 aa).

The protein belongs to the galactose-1-phosphate uridylyltransferase type 2 family.

Its subcellular location is the cytoplasm. The enzyme catalyses alpha-D-galactose 1-phosphate + UDP-alpha-D-glucose = alpha-D-glucose 1-phosphate + UDP-alpha-D-galactose. It participates in carbohydrate metabolism; galactose metabolism. In Butyrivibrio fibrisolvens, this protein is Galactose-1-phosphate uridylyltransferase (galT).